A 360-amino-acid chain; its full sequence is Cyclin-Y-like protein 2 (360 aa).

The Cyclin N-terminal domain maps to 204–286; that stretch reads RLTAEFAIVS…FLKLINYNIG (83 aa).

Belongs to the cyclin family. Cyclin Y subfamily.

This Macaca fascicularis (Crab-eating macaque) protein is Cyclin-Y-like protein 2 (CCNYL2).